The primary structure comprises 84 residues: Cell division topological specificity factor (84 aa).

The protein belongs to the MinE family.

Functionally, prevents the cell division inhibition by proteins MinC and MinD at internal division sites while permitting inhibition at polar sites. This ensures cell division at the proper site by restricting the formation of a division septum at the midpoint of the long axis of the cell. In Cupriavidus pinatubonensis (strain JMP 134 / LMG 1197) (Cupriavidus necator (strain JMP 134)), this protein is Cell division topological specificity factor.